Consider the following 277-residue polypeptide: Putative acetylornithine deacetylase (277 aa).

It carries out the reaction N(2)-acetyl-L-ornithine + H2O = L-ornithine + acetate. Its pathway is amino-acid biosynthesis; L-arginine biosynthesis; L-ornithine from N(2)-acetyl-L-ornithine (linear): step 1/1. This Leptospira biflexa protein is Putative acetylornithine deacetylase (argE).